The primary structure comprises 231 residues: Probable tetraspanin tspE (231 aa).

The Cytoplasmic segment spans residues 1–21 (MTFVDNFEFNQNTPRLVRGPF). Residues 22–42 (IILNSIIFSLSFILLCSTGII) form a helical membrane-spanning segment. Residues 43 to 58 (IYYLNEYYLVKDLTIP) are Extracellular-facing. A helical membrane pass occupies residues 59–79 (LGSFILSAYMVITTIVGGIAI). Over 80-83 (WKKK) the chain is Cytoplasmic. Residues 84–104 (LGLHLTFMVFLVVLIVCLVGV) form a helical membrane-spanning segment. Topologically, residues 105–195 (SAKMIVDSGN…VESILKYLGY (91 aa)) are extracellular. A helical membrane pass occupies residues 196–216 (YGIVLSVIELILLILSGFFLL). Over 217–231 (KTNKNVKSKSFILQD) the chain is Cytoplasmic.

It belongs to the tetraspanin (TM4SF) family.

Its subcellular location is the membrane. This is Probable tetraspanin tspE (tspE) from Dictyostelium discoideum (Social amoeba).